A 353-amino-acid chain; its full sequence is Photosystem II protein D1 (353 aa).

N-acetylthreonine is present on Thr-2. A Phosphothreonine modification is found at Thr-2. The next 3 helical transmembrane spans lie at 29-46 (YIGW…TAIS), 118-133 (HFLL…EWEL), and 142-156 (WIAV…AATA). His-118 lines the chlorophyll a pocket. Tyr-126 is a pheophytin a binding site. [CaMn4O5] cluster is bound by residues Asp-170 and Glu-189. Residues 197-218 (FHMLGVAGVFGGSLFSAMHGSL) traverse the membrane as a helical segment. His-198 is a binding site for chlorophyll a. A quinone is bound by residues His-215 and 264 to 265 (SF). His-215 provides a ligand contact to Fe cation. His-272 serves as a coordination point for Fe cation. The chain crosses the membrane as a helical span at residues 274 to 288 (FLAVWPVVGIWFTAM). The [CaMn4O5] cluster site is built by His-332, Glu-333, Asp-342, and Ala-344. A propeptide spanning residues 345 to 353 (SVEAPAVNG) is cleaved from the precursor.

This sequence belongs to the reaction center PufL/M/PsbA/D family. As to quaternary structure, PSII is composed of 1 copy each of membrane proteins PsbA, PsbB, PsbC, PsbD, PsbE, PsbF, PsbH, PsbI, PsbJ, PsbK, PsbL, PsbM, PsbT, PsbX, PsbY, PsbZ, Psb30/Ycf12, at least 3 peripheral proteins of the oxygen-evolving complex and a large number of cofactors. It forms dimeric complexes. Requires The D1/D2 heterodimer binds P680, chlorophylls that are the primary electron donor of PSII, and subsequent electron acceptors. It shares a non-heme iron and each subunit binds pheophytin, quinone, additional chlorophylls, carotenoids and lipids. D1 provides most of the ligands for the Mn4-Ca-O5 cluster of the oxygen-evolving complex (OEC). There is also a Cl(-1) ion associated with D1 and D2, which is required for oxygen evolution. The PSII complex binds additional chlorophylls, carotenoids and specific lipids. as cofactor. Tyr-161 forms a radical intermediate that is referred to as redox-active TyrZ, YZ or Y-Z. Post-translationally, C-terminally processed by CTPA; processing is essential to allow assembly of the oxygen-evolving complex and thus photosynthetic growth.

Its subcellular location is the plastid. It localises to the chloroplast thylakoid membrane. The enzyme catalyses 2 a plastoquinone + 4 hnu + 2 H2O = 2 a plastoquinol + O2. Photosystem II (PSII) is a light-driven water:plastoquinone oxidoreductase that uses light energy to abstract electrons from H(2)O, generating O(2) and a proton gradient subsequently used for ATP formation. It consists of a core antenna complex that captures photons, and an electron transfer chain that converts photonic excitation into a charge separation. The D1/D2 (PsbA/PsbD) reaction center heterodimer binds P680, the primary electron donor of PSII as well as several subsequent electron acceptors. The protein is Photosystem II protein D1 of Mesostigma viride (Green alga).